Here is a 160-residue protein sequence, read N- to C-terminus: Nucleotide-binding protein Noc_2254 (160 aa).

The protein belongs to the YajQ family.

Nucleotide-binding protein. This is Nucleotide-binding protein Noc_2254 from Nitrosococcus oceani (strain ATCC 19707 / BCRC 17464 / JCM 30415 / NCIMB 11848 / C-107).